Reading from the N-terminus, the 256-residue chain is Thiazole synthase (256 aa).

Lysine 96 acts as the Schiff-base intermediate with DXP in catalysis. Residues glycine 157, 184–185 (AG), and 206–207 (NT) each bind 1-deoxy-D-xylulose 5-phosphate.

It belongs to the ThiG family. In terms of assembly, homotetramer. Forms heterodimers with either ThiH or ThiS.

Its subcellular location is the cytoplasm. It carries out the reaction [ThiS sulfur-carrier protein]-C-terminal-Gly-aminoethanethioate + 2-iminoacetate + 1-deoxy-D-xylulose 5-phosphate = [ThiS sulfur-carrier protein]-C-terminal Gly-Gly + 2-[(2R,5Z)-2-carboxy-4-methylthiazol-5(2H)-ylidene]ethyl phosphate + 2 H2O + H(+). The protein operates within cofactor biosynthesis; thiamine diphosphate biosynthesis. Catalyzes the rearrangement of 1-deoxy-D-xylulose 5-phosphate (DXP) to produce the thiazole phosphate moiety of thiamine. Sulfur is provided by the thiocarboxylate moiety of the carrier protein ThiS. In vitro, sulfur can be provided by H(2)S. This chain is Thiazole synthase, found in Brucella abortus (strain S19).